We begin with the raw amino-acid sequence, 541 residues long: Zinc finger protein 513 (541 aa).

The segment at 1–120 (MPRRKQSHPQ…ARGERPGPAC (120 aa)) is disordered. Positions 44 to 55 (LEFEEEEEEEEG) are enriched in acidic residues. Phosphoserine is present on residues serine 85 and serine 96. Over residues 103-115 (EPARGPGEARGER) the composition is skewed to basic and acidic residues. 8 C2H2-type zinc fingers span residues 150–172 (YSCR…MQTH), 178–200 (FRCG…TRTH), 206–228 (YRCP…QRTH), 360–382 (FACS…MKTH), 388–410 (FRCA…QRVH), 416–438 (YKCP…GRIH), 444–466 (FRCS…MLRH), and 472–494 (FRCA…QKVH). The tract at residues 492 to 541 (KVHGHGGAGGPGLSAPEGWAPPHSPPSVLSTRGSAALGATGSRALHTDSP) is disordered.

This sequence belongs to the krueppel C2H2-type zinc-finger protein family. In terms of assembly, binds DNA. Can associate with the proximal promoter regions of PAX6 and SP4, and their known targets including ARR3, RHO, OPN1MW2 and OPN1SW.

It is found in the nucleus. Its function is as follows. Transcriptional regulator that plays a role in retinal development and maintenance. This is Zinc finger protein 513 (Znf513) from Rattus norvegicus (Rat).